The following is a 127-amino-acid chain: Large ribosomal subunit protein bL17 (127 aa).

This sequence belongs to the bacterial ribosomal protein bL17 family. In terms of assembly, part of the 50S ribosomal subunit. Contacts protein L32.

The chain is Large ribosomal subunit protein bL17 from Legionella pneumophila (strain Lens).